Reading from the N-terminus, the 340-residue chain is Ketol-acid reductoisomerase (NADP(+)) (340 aa).

The KARI N-terminal Rossmann domain maps to 3 to 182; that stretch reads VTMYYEEDVE…GCARVGIIET (180 aa). NADP(+) is bound by residues 26 to 29, Arg49, Ser53, and 83 to 86; these read YGSQ and DELQ. His108 is an active-site residue. An NADP(+)-binding site is contributed by Gly134. One can recognise a KARI C-terminal knotted domain in the interval 183 to 328; the sequence is TFKEETEEDL…AELRKAMPFT (146 aa). Mg(2+) contacts are provided by Asp191, Glu195, Glu227, and Glu231. Position 252 (Ser252) interacts with substrate.

Belongs to the ketol-acid reductoisomerase family. Mg(2+) serves as cofactor.

It catalyses the reaction (2R)-2,3-dihydroxy-3-methylbutanoate + NADP(+) = (2S)-2-acetolactate + NADPH + H(+). The enzyme catalyses (2R,3R)-2,3-dihydroxy-3-methylpentanoate + NADP(+) = (S)-2-ethyl-2-hydroxy-3-oxobutanoate + NADPH + H(+). It functions in the pathway amino-acid biosynthesis; L-isoleucine biosynthesis; L-isoleucine from 2-oxobutanoate: step 2/4. The protein operates within amino-acid biosynthesis; L-valine biosynthesis; L-valine from pyruvate: step 2/4. Involved in the biosynthesis of branched-chain amino acids (BCAA). Catalyzes an alkyl-migration followed by a ketol-acid reduction of (S)-2-acetolactate (S2AL) to yield (R)-2,3-dihydroxy-isovalerate. In the isomerase reaction, S2AL is rearranged via a Mg-dependent methyl migration to produce 3-hydroxy-3-methyl-2-ketobutyrate (HMKB). In the reductase reaction, this 2-ketoacid undergoes a metal-dependent reduction by NADPH to yield (R)-2,3-dihydroxy-isovalerate. The protein is Ketol-acid reductoisomerase (NADP(+)) of Lactococcus lactis subsp. cremoris (strain SK11).